The primary structure comprises 132 residues: MTMTDPLGDMLTRIRNGASRRKSSVSTPASKLRARVLDVLQSEGYIRGYSVVDFGNGKSELSIELKYYEGASVIREIGRVSKPGRRVYVSVKSIPQVANGLGITILSTPKGVMADHQAREQNVGGEVLCSVF.

Belongs to the universal ribosomal protein uS8 family. As to quaternary structure, part of the 30S ribosomal subunit. Contacts proteins S5 and S12.

Its function is as follows. One of the primary rRNA binding proteins, it binds directly to 16S rRNA central domain where it helps coordinate assembly of the platform of the 30S subunit. The chain is Small ribosomal subunit protein uS8 from Rhizobium johnstonii (strain DSM 114642 / LMG 32736 / 3841) (Rhizobium leguminosarum bv. viciae).